The sequence spans 210 residues: 2-hydroxy-3-keto-5-methylthiopentenyl-1-phosphate phosphatase (210 aa).

The protein belongs to the HAD-like hydrolase superfamily. MtnX family.

It carries out the reaction 2-hydroxy-5-methylsulfanyl-3-oxopent-1-enyl phosphate + H2O = 1,2-dihydroxy-5-(methylsulfanyl)pent-1-en-3-one + phosphate. The protein operates within amino-acid biosynthesis; L-methionine biosynthesis via salvage pathway; L-methionine from S-methyl-5-thio-alpha-D-ribose 1-phosphate: step 4/6. Functionally, dephosphorylates 2-hydroxy-3-keto-5-methylthiopentenyl-1-phosphate (HK-MTPenyl-1-P) yielding 1,2-dihydroxy-3-keto-5-methylthiopentene (DHK-MTPene). In Microcystis aeruginosa (strain NIES-843 / IAM M-2473), this protein is 2-hydroxy-3-keto-5-methylthiopentenyl-1-phosphate phosphatase.